The sequence spans 288 residues: Phosphate import ATP-binding protein PstB (288 aa).

The region spanning 42 to 283 (IRDLNFYYEN…PKEKKTRDYI (242 aa)) is the ABC transporter domain. Residue 74–81 (GPSGCGKS) participates in ATP binding.

Belongs to the ABC transporter superfamily. Phosphate importer (TC 3.A.1.7) family. In terms of assembly, the complex is composed of two ATP-binding proteins (PstB), two transmembrane proteins (PstC and PstA) and a solute-binding protein (PstS).

The protein resides in the cell membrane. It catalyses the reaction phosphate(out) + ATP + H2O = ADP + 2 phosphate(in) + H(+). Part of the ABC transporter complex PstSACB involved in phosphate import. Responsible for energy coupling to the transport system. In Malacoplasma penetrans (strain HF-2) (Mycoplasma penetrans), this protein is Phosphate import ATP-binding protein PstB.